We begin with the raw amino-acid sequence, 185 residues long: Inner membrane-spanning protein YciB (185 aa).

5 consecutive transmembrane segments (helical) span residues 19-39 (LGGV…QIVI), 53-73 (IMAS…EIRY), 76-96 (WKVT…QFQF), 118-138 (TLNF…IYIS), and 149-169 (FKSF…GVYI).

Belongs to the YciB family.

The protein localises to the cell inner membrane. Its function is as follows. Plays a role in cell envelope biogenesis, maintenance of cell envelope integrity and membrane homeostasis. This chain is Inner membrane-spanning protein YciB, found in Haemophilus influenzae (strain PittEE).